Consider the following 503-residue polypeptide: MSEQQNAELDFHGEMAVRREKLAALRAKGNAFPNTFRRDALAQDLHNQYDETDGEQLKEKDLHVAVAGRIMTRRTMGKATFITIQDMSGKIQLYVARDNLPEGVYGEDVKSWDLGDIVGIKGTLFKTKTNELTVKAHEVQLLTKALRPLPDKFHGLSDQETRYRQRYLDLISNEESRRTFVIRSKVIAGIREYFIGKGFIEVETPMLQVIPGGAAARPFVTHHNALDIDMYLRIAPELYLKRLVVGGFERVFELNRNFRNEGVSVRHNPEFTMIEYYQAYADYHDLMDNTEELLRKLALDILGTTIVPYGEYEFDFGKPFERITMHDAVIKYGAEKGIVKEDLYDLDRAKAAAAKLGIEIQKSWGLGSIVNAIFEEVAEHHLIQPTFLMAHPAEISPLARRNDENPEVTDRFELFIGGREIGNGFSELNDAEDQAERFDAQVAAKDAGDDEAMFKDDDFVTALEHGLPPTAGEGLGIDRLAMLFANAPSIRDVILFPAMKHKG.

Glu-413 and Glu-420 together coordinate Mg(2+).

It belongs to the class-II aminoacyl-tRNA synthetase family. In terms of assembly, homodimer. Mg(2+) is required as a cofactor.

It is found in the cytoplasm. The catalysed reaction is tRNA(Lys) + L-lysine + ATP = L-lysyl-tRNA(Lys) + AMP + diphosphate. The protein is Lysine--tRNA ligase of Mannheimia succiniciproducens (strain KCTC 0769BP / MBEL55E).